Reading from the N-terminus, the 438-residue chain is Serine hydroxymethyltransferase (438 aa).

133 to 135 (GHI) is a binding site for (6S)-5,6,7,8-tetrahydrofolate. At K239 the chain carries N6-(pyridoxal phosphate)lysine.

The protein belongs to the SHMT family. As to quaternary structure, homodimer. It depends on pyridoxal 5'-phosphate as a cofactor.

Its subcellular location is the cytoplasm. The catalysed reaction is 5,10-methylenetetrahydromethanopterin + glycine + H2O = 5,6,7,8-tetrahydromethanopterin + L-serine. It participates in amino-acid biosynthesis; glycine biosynthesis; glycine from L-serine: step 1/1. In terms of biological role, catalyzes the reversible interconversion of serine and glycine with tetrahydromethanopterin (H4MPT) serving as the one-carbon carrier. Also exhibits a pteridine-independent aldolase activity toward beta-hydroxyamino acids, producing glycine and aldehydes, via a retro-aldol mechanism. The sequence is that of Serine hydroxymethyltransferase from Archaeoglobus fulgidus (strain ATCC 49558 / DSM 4304 / JCM 9628 / NBRC 100126 / VC-16).